An 895-amino-acid polypeptide reads, in one-letter code: Protein translocase subunit SecA (895 aa).

Residues Gln86, 104-108 (GEGKT), and Asp494 each bind ATP. Composition is skewed to low complexity over residues 838-849 (AAATPPGFGAPP) and 870-882 (GDAA…TGNR). The interval 838-895 (AAATPPGFGAPPVRQQLQYSAPTAEGDVEVHAGDAAATDADTGNRAQRRANQRQQREV) is disordered.

Belongs to the SecA family. As to quaternary structure, monomer and homodimer. Part of the essential Sec protein translocation apparatus which comprises SecA, SecYEG and auxiliary proteins SecDF. Other proteins may also be involved.

The protein resides in the cell membrane. The protein localises to the cytoplasm. The catalysed reaction is ATP + H2O + cellular proteinSide 1 = ADP + phosphate + cellular proteinSide 2.. In terms of biological role, part of the Sec protein translocase complex. Interacts with the SecYEG preprotein conducting channel. Has a central role in coupling the hydrolysis of ATP to the transfer of proteins into and across the cell membrane, serving as an ATP-driven molecular motor driving the stepwise translocation of polypeptide chains across the membrane. The polypeptide is Protein translocase subunit SecA (Kineococcus radiotolerans (strain ATCC BAA-149 / DSM 14245 / SRS30216)).